The sequence spans 333 residues: Fatty acid hydroxylase domain-containing protein 2 (333 aa).

Helical transmembrane passes span 29 to 49 (FILG…TWHL), 77 to 97 (ILFF…FNGL), 134 to 154 (TVLF…YPFL), 168 to 188 (FHWF…LFYY), 215 to 235 (VISL…PVIV), and 237 to 257 (PLVM…ALII). In terms of domain architecture, Fatty acid hydroxylase spans 176-299 (AIFTLIEEVL…LGVLDHLHGT (124 aa)).

The protein belongs to the sterol desaturase family. In terms of tissue distribution, down-regulated in primary acute myeloid leukemia (AML) patients.

The protein localises to the cytoplasm. It localises to the membrane. Promotes megakaryocyte differentiation by enhancing ERK phosphorylation and up-regulating RUNX1 expression. This chain is Fatty acid hydroxylase domain-containing protein 2 (FAXDC2), found in Homo sapiens (Human).